The following is a 176-amino-acid chain: Gamma-crystallin M2 (176 aa).

Beta/gamma crystallin 'Greek key' domains are found at residues Gly2–Gly40 and Gly41–Pro83. The tract at residues Gln84–Ser88 is connecting peptide. Beta/gamma crystallin 'Greek key' domains lie at Tyr89–Asp129 and Gly130–Met172.

It belongs to the beta/gamma-crystallin family. Monomer.

Functionally, crystallins are the dominant structural components of the vertebrate eye lens. This chain is Gamma-crystallin M2 (GM2), found in Chiloscyllium indicum (Slender bamboo shark).